Reading from the N-terminus, the 69-residue chain is UPF0437 protein AZC_3451 (69 aa).

The protein belongs to the UPF0437 family.

In Azorhizobium caulinodans (strain ATCC 43989 / DSM 5975 / JCM 20966 / LMG 6465 / NBRC 14845 / NCIMB 13405 / ORS 571), this protein is UPF0437 protein AZC_3451.